The sequence spans 116 residues: MTTIIFLFSITIAVAVVLGLAAHALPNRTSDSEKSSPYECGFDPLNSARLPFSFRFFLVAILFLLFDLEIALLFPLPAASLITPPSTLIPISMVFMVILTLGLVFEWINGGLEWAE.

Transmembrane regions (helical) follow at residues 4–24 (IIFL…AAHA), 56–76 (FFLV…LFPL), and 88–108 (LIPI…FEWI).

This sequence belongs to the complex I subunit 3 family.

The protein resides in the mitochondrion membrane. It catalyses the reaction a ubiquinone + NADH + 5 H(+)(in) = a ubiquinol + NAD(+) + 4 H(+)(out). In terms of biological role, core subunit of the mitochondrial membrane respiratory chain NADH dehydrogenase (Complex I) that is believed to belong to the minimal assembly required for catalysis. Complex I functions in the transfer of electrons from NADH to the respiratory chain. The immediate electron acceptor for the enzyme is believed to be ubiquinone. In Strongylocentrotus purpuratus (Purple sea urchin), this protein is NADH-ubiquinone oxidoreductase chain 3 (ND3).